The primary structure comprises 493 residues: Cysteine sulfinic acid decarboxylase (493 aa).

Lys305 carries the post-translational modification N6-(pyridoxal phosphate)lysine.

The protein belongs to the group II decarboxylase family. In terms of assembly, homodimer. Pyridoxal 5'-phosphate serves as cofactor. In terms of tissue distribution, expressed in kidney and liver not detected in lymphoid tissues and lung. Expressed in kidney, liver and brain. 7 and 4 times higher expression in kidney and liver than in brain, respectively. Low level of detection in skeletal muscle. Expressed in brain, olfactory bulb, liver, skeletal muscle and kidney with the highest expression in liver and lowest in skeletal muscle (at protein level).

The enzyme catalyses L-aspartate + H(+) = beta-alanine + CO2. It carries out the reaction 3-sulfino-L-alanine + H(+) = hypotaurine + CO2. The catalysed reaction is L-cysteate + H(+) = taurine + CO2. Its pathway is organosulfur biosynthesis; taurine biosynthesis; hypotaurine from L-cysteine: step 2/2. Activated by Mn(2+). Inhibited by bis-carboxymethyl-trithiocarbonate, ethylxanthogenacetic acid and 2,5-disulfoaniline. Not affected by Li(+) within 0.05-40 mM concentration range. Functionally, catalyzes the decarboxylation of L-aspartate, 3-sulfino-L-alanine (cysteine sulfinic acid), and L-cysteate to beta-alanine, hypotaurine and taurine, respectively. The preferred substrate is 3-sulfino-L-alanine. Does not exhibit any decarboxylation activity toward glutamate. The chain is Cysteine sulfinic acid decarboxylase from Mus musculus (Mouse).